Consider the following 737-residue polypeptide: UPF0507 protein YML002W (737 aa).

The 83-residue stretch at 1-83 folds into the VPS9 domain; the sequence is MDSHQLELPD…FEDFNKNTGN (83 aa).

The protein belongs to the UPF0507 family.

This chain is UPF0507 protein YML002W, found in Saccharomyces cerevisiae (strain ATCC 204508 / S288c) (Baker's yeast).